The sequence spans 313 residues: MAATSLVLTCASPLFSSPRVISATKKLTTELSISTAKFRRRCSGNNDEVLLEGMPPEYYDDEWQARQREKTKELRRMQREEEEEEERKIEEYREIGTRLKEFPEQDLRKARKLVSSFIRAAEEVEERIEEAAEKGELDELVLMIIWNRLDLARRDDEKDAIRSLDLLYRRVETEILKRQASPAMKLLNDLLNMHDGFEDDAWLKDCRKRMAETFPREDPFSILMPPGFDIDMHQGQLRPPIETETDNTLLRVDFVREVDALLQEVRIEEDATTGSKGEGLDPEAIALKFKQQEKQRTIRQIEAILDLALNLKW.

Residues 1-22 (MAATSLVLTCASPLFSSPRVIS) constitute a chloroplast transit peptide.

As to expression, expressed in green tissues, including leaves. Accumulates in chloroplasts of mature stomatal guard cells.

It is found in the plastid. Its subcellular location is the chloroplast. The protein resides in the chromoplast. It localises to the etioplast. The protein localises to the amyloplast. Functionally, required for the differentiation of chloroplast from proplastids or etioplasts, probably by modulating some chloroplast-encoded genes expression and mRNA maturation. Involved in leaf-cells differentiation. The sequence is that of Protein PALE CRESS, chloroplastic (PAC) from Arabidopsis thaliana (Mouse-ear cress).